The sequence spans 249 residues: Probable GDP-mannose transporter 2 (249 aa).

Residues 1–15 (MIYTSSKSLQYLAVP) are Lumenal-facing. A helical membrane pass occupies residues 16 to 36 (IYTIFKNLTIILIAYGEVLFF). The Cytoplasmic portion of the chain corresponds to 37–47 (GGKVTSMELTS). The chain crosses the membrane as a helical span at residues 48-68 (FIMMVLSSVVATWGDQQAIAI). The Lumenal portion of the chain corresponds to 69-84 (KASSLEDLDQELVEST). The chain crosses the membrane as a helical span at residues 85–105 (IFVLNPGYLWMFTNCISSALF). Over 106–122 (VLIMRKRIRLTNFKDYD) the chain is Cytoplasmic. The helical transmembrane segment at 123–143 (TMFYNNVLALPLLLVFSFIME) threads the bilayer. The Lumenal portion of the chain corresponds to 144 to 159 (DWSTKNLSVNLSADSL). 2 N-linked (GlcNAc...) asparagine glycosylation sites follow: N149 and N153. A helical transmembrane segment spans residues 160–180 (AAMVISGLMSVGISYCSGWCV). Topologically, residues 181-186 (RVTSST) are cytoplasmic. The chain crosses the membrane as a helical span at residues 187–207 (TYSMVGALNKLPIALAGLVFF). Residues 208 to 211 (DAPK) lie on the Lumenal side of the membrane. The chain crosses the membrane as a helical span at residues 212–232 (NFLSFFSIFLGFLSGLLYAVA). Residues 233 to 249 (KQKKIQQQKVLAATLEK) lie on the Cytoplasmic side of the membrane.

The protein belongs to the TPT transporter family. SLC35D subfamily.

The protein resides in the golgi apparatus membrane. It is found in the cytoplasmic vesicle membrane. Its subcellular location is the endoplasmic reticulum membrane. In terms of biological role, involved in the import of GDP-mannose from the cytoplasm into the Golgi lumen. The polypeptide is Probable GDP-mannose transporter 2 (HVG1) (Saccharomyces cerevisiae (strain RM11-1a) (Baker's yeast)).